The chain runs to 226 residues: MRAPPLLLLLAACAPPPCAAAAPTPPGWEPTPDAPWCPYKVLPEGPEAGGGRLCFRSPARGFRCQAPGCVLHAPAGRSLRASVLRNRSVLLQWRLAPAAARRVRAFALNCSWRGAYTRFPCERVLLGASCRDYLLPDVHDSVLYRLCLQPLPLRAGPAAAAPETPEPAECVEFTAEPAGMQDIVVAMTAVGGSICVMLVVICLLVAYITENLMRPALARPGLRRHP.

A signal peptide spans 1–20; it reads MRAPPLLLLLAACAPPPCAA. Over 21–182 the chain is Extracellular; it reads AAPTPPGWEP…FTAEPAGMQD (162 aa). The Fibronectin type-III domain maps to 74–166; it reads PAGRSLRASV…PAAAAPETPE (93 aa). Asn-86 and Asn-109 each carry an N-linked (GlcNAc...) asparagine glycan. Residues 183–203 traverse the membrane as a helical segment; sequence IVVAMTAVGGSICVMLVVICL. Over 204–226 the chain is Cytoplasmic; it reads LVAYITENLMRPALARPGLRRHP.

It is found in the membrane. This is Fibronectin type III domain-containing protein 10 (FNDC10) from Homo sapiens (Human).